The following is a 594-amino-acid chain: Putative phospholipase B-like 2 (594 aa).

Residues 1–46 (MAAPVDGSSGGWAARALRRALALTSLTTLALLASLTGLLLSGPAGA) form the signal peptide. Residues Asn-93 and Asn-115 are each glycosylated (N-linked (GlcNAc...) asparagine). Residues Cys-147 and Cys-157 are joined by a disulfide bond. N-linked (GlcNAc...) asparagine glycosylation is found at Asn-236 and Asn-441. A disulfide bridge links Cys-497 with Cys-500. Asn-520 is a glycosylation site (N-linked (GlcNAc...) asparagine).

This sequence belongs to the phospholipase B-like family. Interacts with IGF2R. The p76 protein is synthesized as a 76 kDa precursor which is then processed into a N-terminal 28 kDa form and a C-terminal 40 kDa form. The C-terminal peptide is further processed into a 15 kDa form. Post-translationally, glycosylated; contains mannose 6-phosphate sugars. In terms of tissue distribution, present at highest levels in spleen, lung and brain (at protein level).

It localises to the lysosome lumen. Putative phospholipase. The chain is Putative phospholipase B-like 2 (Plbd2) from Mus musculus (Mouse).